Here is a 557-residue protein sequence, read N- to C-terminus: Putative glutathione-regulated potassium-efflux system protein KefB (557 aa).

10 helical membrane-spanning segments follow: residues 2–22 (LGYL…ISDV), 24–44 (EILH…GLEL), 56–76 (IFGV…GLLM), 84–104 (AAVV…LQLM), 121–141 (VLLF…LLAG), 146–166 (HFDW…LIGG), 176–196 (FIAA…LVLG), 199–219 (LFMD…GVLL), 237–257 (GLLL…GVLY), and 260–280 (LLWV…VLYL). In terms of domain architecture, RCK N-terminal spans 356-475 (KPQVIVVGFG…AGVTQFSRET (120 aa)).

Belongs to the monovalent cation:proton antiporter 2 (CPA2) transporter (TC 2.A.37) family. KefB subfamily. Interacts with the regulatory subunit KefG.

The protein resides in the cell inner membrane. In terms of biological role, pore-forming subunit of a potassium efflux system that confers protection against electrophiles. Catalyzes K(+)/H(+) antiport. This chain is Putative glutathione-regulated potassium-efflux system protein KefB, found in Shigella flexneri.